The chain runs to 758 residues: Spastin (758 aa).

The disordered stretch occupies residues 1-103 (MVRTKNQSSS…SPRSGHHHSY (103 aa)). The Cytoplasmic portion of the chain corresponds to 1–121 (MVRTKNQSSS…KQNLYVVSFP (121 aa)). The tract at residues 1 to 210 (MVRTKNQSSS…RPIQPLEMAA (210 aa)) is required for localization to punctate cytoplasmic foci. Composition is skewed to low complexity over residues 8-28 (SSSS…SSGA), 43-58 (RSSS…AGGS), 66-76 (SSNRRSPGSSP), and 85-95 (TDDLTPTTCSP). An intramembrane region (helical) is located at residues 122 to 142 (IIFLFNVLRSLIYQLFCIFRY). At 143-758 (LYGASTKVIY…WSQDYGDITI (616 aa)) the chain is on the cytoplasmic side. Polar residues-rich tracts occupy residues 169–180 (SKEQQQSLNHPS) and 189–198 (QEQQLSNQPQ). Residues 169–202 (SKEQQQSLNHPSELNREGDGQEQQLSNQPQRFRP) form a disordered region. Residues 208 to 758 (MAANRPGGGY…WSQDYGDITI (551 aa)) form a sufficient for interaction with microtubules and microtubule severing region. The region spanning 233–308 (HRRAFEYISK…SMARDRLHFL (76 aa)) is the MIT domain. Residues 323–339 (KEKQKEEARSKPQKSRE) show a composition bias toward basic and acidic residues. Residues 323-454 (KEKQKEEARS…GPSGSGASTP (132 aa)) are disordered. 2 stretches are compositionally biased toward polar residues: residues 390–406 (NKSQ…TSVG) and 425–454 (QFSS…ASTP). The required for interaction with microtubules stretch occupies residues 443 to 455 (NNGPSGSGASTPV). 523-530 (GPPGNGKT) is an ATP binding site.

This sequence belongs to the AAA ATPase family. Spastin subfamily. Homohexamer. The homohexamer is stabilized by ATP-binding. The homohexamer may adopt a ring conformation through which microtubules pass prior to being severed. Interacts with microtubules. Interacts with atl; may be involved in microtubule dynamics.

Its subcellular location is the membrane. It localises to the cytoplasm. It is found in the cytoskeleton. The protein localises to the microtubule organizing center. The protein resides in the centrosome. Its subcellular location is the chromosome. It localises to the lipid droplet. The enzyme catalyses n ATP + n H2O + a microtubule = n ADP + n phosphate + (n+1) alpha/beta tubulin heterodimers.. ATP-dependent microtubule severing protein. Stimulates microtubule minus-end depolymerization and poleward microtubule flux in the mitotic spindle. Regulates microtubule stability in the neuromuscular junction synapse. Involved in lipid metabolism by regulating the size and distribution of lipid droplets. Involved in axon regeneration by regulating microtubule severing. This chain is Spastin, found in Drosophila simulans (Fruit fly).